The following is a 734-amino-acid chain: Photosystem I P700 chlorophyll a apoprotein A2 (734 aa).

8 consecutive transmembrane segments (helical) span residues 46-69 (IFAS…FHVA), 135-158 (LYTG…LHLQ), 175-199 (LNHH…HVAI), 273-291 (IAHH…GHMY), 330-353 (LHFQ…QHMY), 369-395 (AALY…IFFI), 417-439 (AIIS…LYVH), and 517-535 (FLVH…LILV). Positions 559 and 568 each coordinate [4Fe-4S] cluster. 2 consecutive transmembrane segments (helical) span residues 575-596 (AFYL…YWHW) and 643-665 (LSVW…MFLI). Positions 654, 662, and 670 each coordinate chlorophyll a. W671 contacts phylloquinone. A helical membrane pass occupies residues 707-727 (LVGLAHFSVGYIFTYAAFLIA).

Belongs to the PsaA/PsaB family. In terms of assembly, the PsaA/B heterodimer binds the P700 chlorophyll special pair and subsequent electron acceptors. PSI consists of a core antenna complex that captures photons, and an electron transfer chain that converts photonic excitation into a charge separation. The eukaryotic PSI reaction center is composed of at least 11 subunits. P700 is a chlorophyll a/chlorophyll a' dimer, A0 is one or more chlorophyll a, A1 is one or both phylloquinones and FX is a shared 4Fe-4S iron-sulfur center. serves as cofactor.

It localises to the plastid. It is found in the chloroplast thylakoid membrane. It carries out the reaction reduced [plastocyanin] + hnu + oxidized [2Fe-2S]-[ferredoxin] = oxidized [plastocyanin] + reduced [2Fe-2S]-[ferredoxin]. Functionally, psaA and PsaB bind P700, the primary electron donor of photosystem I (PSI), as well as the electron acceptors A0, A1 and FX. PSI is a plastocyanin-ferredoxin oxidoreductase, converting photonic excitation into a charge separation, which transfers an electron from the donor P700 chlorophyll pair to the spectroscopically characterized acceptors A0, A1, FX, FA and FB in turn. Oxidized P700 is reduced on the lumenal side of the thylakoid membrane by plastocyanin. This is Photosystem I P700 chlorophyll a apoprotein A2 from Citrus sinensis (Sweet orange).